The primary structure comprises 475 residues: Ankyrin repeat, SAM and basic leucine zipper domain-containing protein 1 (475 aa).

Residues 1–22 (MAAGALRGLPVAGGGESSESED) form a disordered region. Ser17, Ser18, and Ser20 each carry phosphoserine. ANK repeat units follow at residues 45 to 74 (EKKE…SVDS), 78 to 107 (YGWT…NASF), 110 to 144 (DKQT…DPNV), 148 to 177 (RLMT…EVNT), 181 to 210 (NGYT…NKML), and 214 to 243 (DGKM…PLEG). Residues 272–334 (SYTAFGDLEV…KILATLKELQ (63 aa)) enclose the SAM domain.

Interacts with DDX4, PIWIL1, RANBP9 and TDRD1.

The protein localises to the cytoplasm. Its function is as follows. Plays a central role during spermatogenesis by repressing transposable elements and preventing their mobilization, which is essential for the germline integrity. Acts via the piRNA metabolic process, which mediates the repression of transposable elements during meiosis by forming complexes composed of piRNAs and Piwi proteins and governs the methylation and subsequent repression of transposons. Its association with pi-bodies suggests a participation in the primary piRNAs metabolic process. Required prior to the pachytene stage to facilitate the production of multiple types of piRNAs, including those associated with repeats involved in the regulation of retrotransposons. May act by mediating protein-protein interactions during germ cell maturation. The sequence is that of Ankyrin repeat, SAM and basic leucine zipper domain-containing protein 1 (ASZ1) from Colobus guereza (Mantled guereza).